A 195-amino-acid chain; its full sequence is ATP-dependent Clp protease proteolytic subunit (195 aa).

S101 (nucleophile) is an active-site residue. Residue H126 is part of the active site.

It belongs to the peptidase S14 family.

It localises to the plastid. It is found in the chloroplast stroma. It catalyses the reaction Hydrolysis of proteins to small peptides in the presence of ATP and magnesium. alpha-casein is the usual test substrate. In the absence of ATP, only oligopeptides shorter than five residues are hydrolyzed (such as succinyl-Leu-Tyr-|-NHMec, and Leu-Tyr-Leu-|-Tyr-Trp, in which cleavage of the -Tyr-|-Leu- and -Tyr-|-Trp bonds also occurs).. Cleaves peptides in various proteins in a process that requires ATP hydrolysis. Has a chymotrypsin-like activity. Plays a major role in the degradation of misfolded proteins. In Bigelowiella natans (Pedinomonas minutissima), this protein is ATP-dependent Clp protease proteolytic subunit.